Here is a 341-residue protein sequence, read N- to C-terminus: Phosphoribosylformylglycinamidine cyclo-ligase (341 aa).

Belongs to the AIR synthase family.

The protein localises to the cytoplasm. The catalysed reaction is 2-formamido-N(1)-(5-O-phospho-beta-D-ribosyl)acetamidine + ATP = 5-amino-1-(5-phospho-beta-D-ribosyl)imidazole + ADP + phosphate + H(+). It participates in purine metabolism; IMP biosynthesis via de novo pathway; 5-amino-1-(5-phospho-D-ribosyl)imidazole from N(2)-formyl-N(1)-(5-phospho-D-ribosyl)glycinamide: step 2/2. In Picosynechococcus sp. (strain ATCC 27264 / PCC 7002 / PR-6) (Agmenellum quadruplicatum), this protein is Phosphoribosylformylglycinamidine cyclo-ligase.